Consider the following 161-residue polypeptide: 2-C-methyl-D-erythritol 2,4-cyclodiphosphate synthase (161 aa).

Positions 10 and 12 each coordinate a divalent metal cation. 4-CDP-2-C-methyl-D-erythritol 2-phosphate-binding positions include 10-12 (DVH) and 36-37 (HS). Histidine 44 is a binding site for a divalent metal cation. 4-CDP-2-C-methyl-D-erythritol 2-phosphate is bound by residues 58–60 (DIG), 63–67 (FSDTD), and arginine 144.

Belongs to the IspF family. In terms of assembly, homotrimer. Requires a divalent metal cation as cofactor.

The catalysed reaction is 4-CDP-2-C-methyl-D-erythritol 2-phosphate = 2-C-methyl-D-erythritol 2,4-cyclic diphosphate + CMP. The protein operates within isoprenoid biosynthesis; isopentenyl diphosphate biosynthesis via DXP pathway; isopentenyl diphosphate from 1-deoxy-D-xylulose 5-phosphate: step 4/6. Functionally, involved in the biosynthesis of isopentenyl diphosphate (IPP) and dimethylallyl diphosphate (DMAPP), two major building blocks of isoprenoid compounds. Catalyzes the conversion of 4-diphosphocytidyl-2-C-methyl-D-erythritol 2-phosphate (CDP-ME2P) to 2-C-methyl-D-erythritol 2,4-cyclodiphosphate (ME-CPP) with a corresponding release of cytidine 5-monophosphate (CMP). This is 2-C-methyl-D-erythritol 2,4-cyclodiphosphate synthase from Burkholderia cenocepacia (strain HI2424).